Consider the following 500-residue polypeptide: Glycerol kinase (500 aa).

Threonine 13 contributes to the ADP binding site. ATP contacts are provided by threonine 13, threonine 14, and serine 15. Threonine 13 provides a ligand contact to sn-glycerol 3-phosphate. Arginine 17 is an ADP binding site. Residues arginine 83, glutamate 84, tyrosine 136, and aspartate 246 each coordinate sn-glycerol 3-phosphate. Arginine 83, glutamate 84, tyrosine 136, aspartate 246, and glutamine 247 together coordinate glycerol. The ADP site is built by threonine 268 and glycine 311. The ATP site is built by threonine 268, glycine 311, glutamine 315, and glycine 412. Positions 412 and 416 each coordinate ADP.

It belongs to the FGGY kinase family.

It catalyses the reaction glycerol + ATP = sn-glycerol 3-phosphate + ADP + H(+). Its pathway is polyol metabolism; glycerol degradation via glycerol kinase pathway; sn-glycerol 3-phosphate from glycerol: step 1/1. Its activity is regulated as follows. Inhibited by fructose 1,6-bisphosphate (FBP). Key enzyme in the regulation of glycerol uptake and metabolism. Catalyzes the phosphorylation of glycerol to yield sn-glycerol 3-phosphate. This is Glycerol kinase from Francisella tularensis subsp. novicida (strain U112).